The sequence spans 244 residues: Ribonuclease HII (244 aa).

The region spanning Arg31–Gly222 is the RNase H type-2 domain. A divalent metal cation contacts are provided by Asp37, Glu38, and Asp130.

The protein belongs to the RNase HII family. Mn(2+) serves as cofactor. Mg(2+) is required as a cofactor.

The protein resides in the cytoplasm. It catalyses the reaction Endonucleolytic cleavage to 5'-phosphomonoester.. In terms of biological role, endonuclease that specifically degrades the RNA of RNA-DNA hybrids. In Xanthomonas axonopodis pv. citri (strain 306), this protein is Ribonuclease HII.